We begin with the raw amino-acid sequence, 195 residues long: Peptidyl-tRNA hydrolase (195 aa).

TRNA is bound at residue Tyr17. His22 acts as the Proton acceptor in catalysis. 3 residues coordinate tRNA: Tyr68, Asn70, and Asn116.

Belongs to the PTH family. In terms of assembly, monomer.

It is found in the cytoplasm. The catalysed reaction is an N-acyl-L-alpha-aminoacyl-tRNA + H2O = an N-acyl-L-amino acid + a tRNA + H(+). Hydrolyzes ribosome-free peptidyl-tRNAs (with 1 or more amino acids incorporated), which drop off the ribosome during protein synthesis, or as a result of ribosome stalling. In terms of biological role, catalyzes the release of premature peptidyl moieties from peptidyl-tRNA molecules trapped in stalled 50S ribosomal subunits, and thus maintains levels of free tRNAs and 50S ribosomes. This is Peptidyl-tRNA hydrolase from Shewanella sp. (strain MR-4).